The following is a 478-amino-acid chain: Adenylosuccinate lyase (478 aa).

Residues 14-15 (RY), 81-83 (KHD), and 107-108 (TS) contribute to the substrate site. H155 (proton donor/acceptor) is an active-site residue. Q237 contacts substrate. The active-site Proton donor/acceptor is S285. The substrate site is built by R299, R325, S330, and R334.

The protein belongs to the lyase 1 family. Adenylosuccinate lyase subfamily. Homotetramer. Residues from neighboring subunits contribute catalytic and substrate-binding residues to each active site.

It carries out the reaction N(6)-(1,2-dicarboxyethyl)-AMP = fumarate + AMP. The catalysed reaction is (2S)-2-[5-amino-1-(5-phospho-beta-D-ribosyl)imidazole-4-carboxamido]succinate = 5-amino-1-(5-phospho-beta-D-ribosyl)imidazole-4-carboxamide + fumarate. The protein operates within purine metabolism; AMP biosynthesis via de novo pathway; AMP from IMP: step 2/2. Its pathway is purine metabolism; IMP biosynthesis via de novo pathway; 5-amino-1-(5-phospho-D-ribosyl)imidazole-4-carboxamide from 5-amino-1-(5-phospho-D-ribosyl)imidazole-4-carboxylate: step 2/2. Its function is as follows. Catalyzes two non-sequential steps in de novo AMP synthesis: converts (S)-2-(5-amino-1-(5-phospho-D-ribosyl)imidazole-4-carboxamido)succinate (SAICAR) to fumarate plus 5-amino-1-(5-phospho-D-ribosyl)imidazole-4-carboxamide, and thereby also contributes to de novo IMP synthesis, and converts succinyladenosine monophosphate (SAMP) to AMP and fumarate. In Caenorhabditis briggsae, this protein is Adenylosuccinate lyase.